The chain runs to 1047 residues: Ubiquitin carboxyl-terminal hydrolase 48 (1047 aa).

A USP domain is found at 89 to 416 (VGLTNLGATC…NAYMLVYKQQ (328 aa)). C98 functions as the Nucleophile in the catalytic mechanism. H348 acts as the Proton acceptor in catalysis. DUSP domains follow at residues 457-551 (QSVD…RSSL), 567-697 (NQLN…DHDP), and 717-830 (MMAN…RIHD). Positions 609 to 647 (LEEDEEETKHNNSKINGEKSSPGTKADGVKGDSEDGDGE) are disordered. Polar residues predominate over residues 621–631 (SKINGEKSSPG). The segment covering 635-647 (DGVKGDSEDGDGE) has biased composition (basic and acidic residues). The disordered stretch occupies residues 887–928 (PEFSVSGSDVEDEKEEPKLDGEKDPDFSQTEGGAKRQKLNDT). The segment covering 901–912 (EEPKLDGEKDPD) has biased composition (basic and acidic residues). A Ubiquitin-like domain is found at 961–1012 (VSANQTLKDLKIQIMHAFSVAPFDQNLSIDGRCLKDDSATLGSLGVIPESII).

The protein belongs to the peptidase C19 family.

It localises to the cytoplasm. The protein resides in the nucleus. The enzyme catalyses Thiol-dependent hydrolysis of ester, thioester, amide, peptide and isopeptide bonds formed by the C-terminal Gly of ubiquitin (a 76-residue protein attached to proteins as an intracellular targeting signal).. In terms of biological role, recognizes and hydrolyzes the peptide bond at the C-terminal Gly of ubiquitin. Involved in the processing of poly-ubiquitin precursors as well as that of ubiquitinated proteins. The protein is Ubiquitin carboxyl-terminal hydrolase 48 (usp48) of Danio rerio (Zebrafish).